A 195-amino-acid polypeptide reads, in one-letter code: Transcription factor 15 (195 aa).

A disordered region spans residues 44–65 (LEAARRGPGPGSGRRASNGAGP). Residues 56-65 (GRRASNGAGP) are compositionally biased toward low complexity. Position 60 is a phosphoserine (Ser60). In terms of domain architecture, bHLH spans 70-122 (RQRQAANARERDRTQSVNTAFTALRTLIPTEPVDRKLSKIETLRLASSYIAHL).

As to quaternary structure, heterodimer; efficient DNA binding requires dimerization with another bHLH protein, such as TCF3/E12. Interacts with MEOX2. Expressed in heart and skeletal muscle. Specifically expressed in a subpopulation of embryonic stem cells (ESCs), that are still undifferentiated but primed for ifferentiation. Expressed in hematopoietic stem cells (HSCs).

Its subcellular location is the nucleus. In terms of biological role, early transcription factor that plays a key role in somitogenesis, paraxial mesoderm development and regulation of stem cell pluripotency. Essential for the mesenchymal to epithelial transition associated with somite formation. Required for somite morphogenesis, thereby regulating patterning of the axial skeleton and skeletal muscles. Required for proper localization of somite epithelium markers during the mesenchymal to epithelial transition. Also plays a key role in regulation of stem cell pluripotency. Promotes pluripotency exit of embryonic stem cells (ESCs) by priming ESCs for differentiation. Acts as a key regulator of self-renewal of hematopoietic stem cells (HSCs) by mediating HSCs quiescence and long-term self-renewal. Together with MEOX2, regulates transcription in heart endothelial cells to regulate fatty acid transport across heart endothelial cells. Acts by forming a heterodimer with another helix-loop-helix (bHLH) protein, such as TCF3/E12, that binds DNA on E-box motifs (5'-CANNTG-3') and activates transcription of target genes. The chain is Transcription factor 15 from Mus musculus (Mouse).